Consider the following 286-residue polypeptide: Polyamine aminopropyltransferase (286 aa).

Positions 2-237 (DLWFSEVHTP…GYWLFGFASK (236 aa)) constitute a PABS domain. S-methyl-5'-thioadenosine is bound at residue Gln-31. Asp-86 serves as a coordination point for spermidine. S-methyl-5'-thioadenosine contacts are provided by residues Glu-106 and 137–138 (NG). Catalysis depends on Asp-155, which acts as the Proton acceptor.

This sequence belongs to the spermidine/spermine synthase family. In terms of assembly, homodimer or homotetramer.

The protein localises to the cytoplasm. It catalyses the reaction S-adenosyl 3-(methylsulfanyl)propylamine + putrescine = S-methyl-5'-thioadenosine + spermidine + H(+). Its pathway is amine and polyamine biosynthesis; spermidine biosynthesis; spermidine from putrescine: step 1/1. Catalyzes the irreversible transfer of a propylamine group from the amino donor S-adenosylmethioninamine (decarboxy-AdoMet) to putrescine (1,4-diaminobutane) to yield spermidine. In Streptococcus pneumoniae serotype 4 (strain ATCC BAA-334 / TIGR4), this protein is Polyamine aminopropyltransferase.